The chain runs to 417 residues: Calreticulin (417 aa).

A signal peptide spans methionine 1 to alanine 17. Positions glutamate 18–glutamate 197 are N-domain. Ca(2+) is bound by residues glutamine 26, lysine 62, and lysine 64. Position 64 is an N6-(2-hydroxyisobutyryl)lysine (lysine 64). An alpha-D-glucoside-binding residues include tyrosine 109, lysine 111, tyrosine 128, and aspartate 135. A disulfide bridge connects residues cysteine 137 and cysteine 163. Lysine 159 is modified (N6-acetyllysine). Residues valine 191 to phenylalanine 202 form a 1-1 repeat. Positions valine 191–glutamate 255 are 4 X approximate repeats. Residues serine 193–proline 277 form a disordered region. Residues aspartate 198–tyrosine 308 form a P-domain region. The segment covering lysine 207–glutamate 251 has biased composition (basic and acidic residues). The residue at position 209 (lysine 209) is an N6-acetyllysine. Repeat copies occupy residues aspartate 210 to glutamate 221, aspartate 227 to lysine 238, aspartate 244 to glutamate 255, glycine 259 to proline 269, glycine 273 to proline 283, and glycine 287 to proline 297. The segment at aspartate 237–glutamate 270 is interaction with PPIB. A compositionally biased stretch (acidic residues) spans aspartate 252 to tryptophan 261. The segment at glycine 259–proline 297 is 3 X approximate repeats. The interval glutamate 309 to leucine 417 is C-domain. An alpha-D-glucoside is bound at residue aspartate 317. Residue aspartate 328 coordinates Ca(2+). Positions threonine 350–leucine 417 are disordered. Residues alanine 352 to glutamate 379 are compositionally biased toward basic and acidic residues. The segment covering glutamate 380–alanine 408 has biased composition (acidic residues). Positions lysine 414–leucine 417 match the Prevents secretion from ER motif.

It belongs to the calreticulin family. In terms of assembly, monomer. Component of an EIF2 complex at least composed of CELF1/CUGBP1, CALR, CALR3, EIF2S1, EIF2S2, HSP90B1 and HSPA5. Interacts with PDIA3/ERp57 and SPACA9. Interacts with TRIM21. Interacts with NR3C1. Interacts with PPIB. Interacts (via P-domain) with PDIA5. Interacts with CLCC1. In blastocyst expressed in all blastomeres (at protein level). In embryos, expressed in spleen, kidney, liver, fat, muscle, ovary, granulosa cells and cumulus cells.

The protein localises to the endoplasmic reticulum lumen. Its subcellular location is the cytoplasm. It localises to the cytosol. It is found in the secreted. The protein resides in the extracellular space. The protein localises to the extracellular matrix. Its subcellular location is the cell surface. It localises to the sarcoplasmic reticulum lumen. It is found in the cytoplasmic vesicle. The protein resides in the secretory vesicle. The protein localises to the cortical granule. Its subcellular location is the cytolytic granule. Functionally, calcium-binding chaperone that promotes folding, oligomeric assembly and quality control in the endoplasmic reticulum (ER) via the calreticulin/calnexin cycle. This lectin interacts transiently with almost all of the monoglucosylated glycoproteins that are synthesized in the ER. Interacts with the DNA-binding domain of NR3C1 and mediates its nuclear export. Involved in maternal gene expression regulation. May participate in oocyte maturation via the regulation of calcium homeostasis. Present in the cortical granules of non-activated oocytes, is exocytosed during the cortical reaction in response to oocyte activation and might participate in the block to polyspermy. This is Calreticulin (CALR) from Sus scrofa (Pig).